A 573-amino-acid polypeptide reads, in one-letter code: Threonine--tRNA ligase (573 aa).

The interval 174–474 is catalytic; it reads DHRRINKILE…LLEQTKGALD (301 aa). Cys268, His319, and His451 together coordinate Zn(2+).

Belongs to the class-II aminoacyl-tRNA synthetase family. Homodimer. The cofactor is Zn(2+).

It localises to the cytoplasm. The catalysed reaction is tRNA(Thr) + L-threonine + ATP = L-threonyl-tRNA(Thr) + AMP + diphosphate + H(+). Its function is as follows. Catalyzes the attachment of threonine to tRNA(Thr) in a two-step reaction: L-threonine is first activated by ATP to form Thr-AMP and then transferred to the acceptor end of tRNA(Thr). Also edits incorrectly charged L-seryl-tRNA(Thr). This chain is Threonine--tRNA ligase, found in Mycoplasmoides gallisepticum (strain R(low / passage 15 / clone 2)) (Mycoplasma gallisepticum).